Consider the following 401-residue polypeptide: Exodeoxyribonuclease 7 large subunit (401 aa).

This sequence belongs to the XseA family. As to quaternary structure, heterooligomer composed of large and small subunits.

The protein resides in the cytoplasm. It catalyses the reaction Exonucleolytic cleavage in either 5'- to 3'- or 3'- to 5'-direction to yield nucleoside 5'-phosphates.. In terms of biological role, bidirectionally degrades single-stranded DNA into large acid-insoluble oligonucleotides, which are then degraded further into small acid-soluble oligonucleotides. This is Exodeoxyribonuclease 7 large subunit from Lachnoclostridium phytofermentans (strain ATCC 700394 / DSM 18823 / ISDg) (Clostridium phytofermentans).